The chain runs to 342 residues: Ornithine carbamoyltransferase, catabolic (342 aa).

Carbamoyl phosphate-binding positions include 59–62 (STRT), Ser83, Arg110, and 137–140 (HPTQ). L-ornithine is bound by residues Asn169, Asp235, and 239 to 240 (SL). Carbamoyl phosphate is bound by residues 276–277 (CL) and Arg328.

The protein belongs to the aspartate/ornithine carbamoyltransferase superfamily. OTCase family. As to quaternary structure, dodecamer (tetramer of trimers).

Its subcellular location is the cytoplasm. It catalyses the reaction carbamoyl phosphate + L-ornithine = L-citrulline + phosphate + H(+). Its pathway is amino-acid degradation; L-arginine degradation via ADI pathway; carbamoyl phosphate from L-arginine: step 2/2. Functionally, nvolved in the catabolism of arginine. Catalyzes the phosphorolysis of citrulline, the reverse reaction of the biosynthetic one, yielding ornithine and carbamoyl phosphate which serve to generate ATP from ADP. The protein is Ornithine carbamoyltransferase, catabolic (arcB) of Malacoplasma penetrans (strain HF-2) (Mycoplasma penetrans).